The sequence spans 251 residues: L-xylulose reductase (251 aa).

Position 13–42 (Leu-13–Asn-42) interacts with NADP(+). A substrate-binding site is contributed by Ser-143. Tyr-156 acts as the Proton acceptor in catalysis. NADP(+) is bound at residue Lys-160.

Belongs to the short-chain dehydrogenases/reductases (SDR) family. As to quaternary structure, homotetramer. In terms of tissue distribution, expressed in intestine, gonad and spermatids (at protein level). Expressed in intestine, uterine seam, gonadal sheath cells, spermathecal-uterus valve and spermatids.

It localises to the cell membrane. The enzyme catalyses xylitol + NADP(+) = L-xylulose + NADPH + H(+). Strongly inhibited by 10% dimethyl sulfoxide. Catalyzes the NADPH-dependent reduction of L-xylulose, D-xylulose, L-(+) erythrulose, D-erythrose, D-threose, L-ribulose, 1,4-dibromo-2,3-butanedione and 2,3-heptanedione. Also active against isatin, 9,10-phenanthrenequinone, menadione, 2,3-hexaenadione and 3,4-hexahenadione. No activity observed when tested using NADH rather than NADPH. The protein is L-xylulose reductase of Caenorhabditis elegans.